A 367-amino-acid chain; its full sequence is Cystinosin (367 aa).

A signal peptide spans 1–22 (MRRNWLLILTLFLLMFIEKYES). Residues 23–125 (TVSLTAPPTV…LVIHSRIVSI (103 aa)) are Lumenal-facing. Residues Asn-36, Asn-51, Asn-66, Asn-84, Asn-104, and Asn-107 are each glycosylated (N-linked (GlcNAc...) asparagine). The 67-residue stretch at 123–189 (VSIINQVIGW…LLWVPYIQEE (67 aa)) folds into the PQ-loop 1 domain. The helical transmembrane segment at 126-150 (INQVIGWIYFMAWSVSFYPQVIQNW) threads the bilayer. Residues 151–159 (RRKSVIGLS) are Cytoplasmic-facing. A helical transmembrane segment spans residues 160–179 (FDFLALNLTGFVAYSVFNIG). Asn-166 is a binding site for L-cystine. The Lumenal portion of the chain corresponds to 180-202 (LLWVPYIQEEFLLKYPNGVNPVD). Residues 203–225 (SNDAFFSLHAVALTLIVILQCCL) traverse the membrane as a helical segment. Asp-205 is a H(+) binding site. Residues 226 to 234 (YERGNQRVS) lie on the Cytoplasmic side of the membrane. A helical transmembrane segment spans residues 235-257 (WPSIGFLVLAWLFVLVTMIVAAV). The Lumenal portion of the chain corresponds to 258–263 (GITTWL). The 66-residue stretch at 263–328 (LQFLFCFSYI…QSYNNDQWTL (66 aa)) folds into the PQ-loop 2 domain. The chain crosses the membrane as a helical span at residues 264-289 (QFLFCFSYIKLIITLIKYFPQAYMNF). L-cystine contacts are provided by Lys-273, Lys-280, and Tyr-281. At 290 to 298 (YYKSTKGWS) the chain is on the cytoplasmic side. The helical transmembrane segment at 299-308 (IGGVLLDFTG) threads the bilayer. Asp-305 contributes to the L-cystine binding site. Asp-305 is a H(+) binding site. Residues 309-331 (GSFSLLQMFLQSYNNDQWTLIFG) are Lumenal-facing. The chain crosses the membrane as a helical span at residues 332–354 (DPTKFGLGVFTIFFDVVFFIQHF). Position 346 (Asp-346) interacts with H(+). At 355–367 (YLYRKKPGYDQLN) the chain is on the cytoplasmic side. The short motif at 362–366 (GYDQL) is the Lysosomal targeting motif element.

This sequence belongs to the cystinosin family. In terms of assembly, interacts with components of the V-ATPase complex. Interacts with components of the Ragulator complex. Interacts with RRAGA/RagA and RRAGC/RagC. Interacts with AP-3 complex subunit mu (AP3M1 or AP3M2).

The protein resides in the lysosome membrane. Its subcellular location is the melanosome membrane. The enzyme catalyses L-cystine(out) + H(+)(out) = L-cystine(in) + H(+)(in). Switches between a lumen- and a cytosol-open conformation: pH induces conformational changes and shifts the equilibrium to facilitate the transition between the lumen- and cytosol-open conformation, thereby promoting cystine transport. Protonation of specific aspartate residues (Asp-205, Asp-305 and Asp-346) favors the cytosol-open conformation. Its function is as follows. Cystine/H(+) symporter that mediates export of cystine, the oxidized dimer of cysteine, from lysosomes. Plays an important role in melanin synthesis by catalyzing cystine export from melanosomes, possibly by inhibiting pheomelanin synthesis. In addition to cystine export, also acts as a positive regulator of mTORC1 signaling in kidney proximal tubular cells, via interactions with components of the v-ATPase and Ragulator complexes. Also involved in small GTPase-regulated vesicle trafficking and lysosomal localization of LAMP2A, independently of cystine transporter activity. The polypeptide is Cystinosin (Mus musculus (Mouse)).